The sequence spans 1479 residues: C-type mannose receptor 2 (1479 aa).

The N-terminal stretch at 1 to 30 (MVPIRPALAPWPRHLLRCVLLLGGLRLGHP) is a signal peptide. At 31 to 1413 (ADSAAALLEP…SAALPESPVA (1383 aa)) the chain is on the extracellular side. Positions 37–190 (LLEPDVFLIF…SHGKPCTIPF (154 aa)) constitute a Ricin B-type lectin domain. A disulfide bridge links C92 with C111. Residues N101 and N139 are each glycosylated (N-linked (GlcNAc...) asparagine). The region spanning 181 to 229 (SHGKPCTIPFKYDNQWFHGCTSTGREDGHLWCATTQDYGKDERWGFCPI) is the Fibronectin type-II domain. 4 disulfide bridges follow: C186-C212, C200-C227, C265-C358, and C334-C350. The C-type lectin 1 domain occupies 243-359 (LTDSCYQFNF…CSIALPYVCK (117 aa)). A glycan (N-linked (GlcNAc...) asparagine) is linked at N363. 7 consecutive C-type lectin domains span residues 388–504 (FQGH…SICK), 527–643 (HSPS…RYIC), 677–808 (KLRH…WICK), 831–950 (FQEA…YICK), 978–1106 (FLNK…GFIC), 1131–1242 (YLNH…GAVC), and 1271–1391 (FREH…GVVC). 7 cysteine pairs are disulfide-bonded: C409–C503, C480–C495, C617–C634, C703–C807, C784–C799, C852–C949, and C926–C941. The N-linked (GlcNAc...) asparagine glycan is linked to N1028. C1077 and C1097 are disulfide-bonded. K1141 is covalently cross-linked (Glycyl lysine isopeptide (Lys-Gly) (interchain with G-Cter in SUMO1)). C1219 and C1233 are oxidised to a cystine. N-linked (GlcNAc...) asparagine glycosylation is present at N1348. The cysteines at positions 1367 and 1382 are disulfide-linked. The chain crosses the membrane as a helical span at residues 1414 to 1434 (LVVVLTAVLLLLALMTAALIL). Residues 1435–1479 (YRRRQSAERGSFEGARYSRSSHSGPAEATEKNILVSDMEMNEQQE) are Cytoplasmic-facing. The disordered stretch occupies residues 1446-1479 (FEGARYSRSSHSGPAEATEKNILVSDMEMNEQQE).

Interacts directly with PLAUR/UPAR and PLAU/pro-UPA to form a tri-molecular complex. Interacts with collagen V and with C-terminal region of type I collagen/COL1A1. Phosphorylated. In terms of tissue distribution, highly expressed in heart, lung and kidney, but little or no expression in brain, thymus or adult liver. Expressed at highly endothelialized sites such as those in choroid plexus and kidney glomerulai as well as in chondrocytes in cartilaginous regions of the embryo.

It is found in the membrane. Its function is as follows. May play a role as endocytotic lectin receptor displaying calcium-dependent lectin activity. Internalizes glycosylated ligands from the extracellular space for release in an endosomal compartment via clathrin-mediated endocytosis. May be involved in plasminogen activation system controlling the extracellular level of PLAUR/PLAU, and thus may regulate protease activity at the cell surface. May contribute to cellular uptake, remodeling and degradation of extracellular collagen matrices. May participate in remodeling of extracellular matrix cooperating with the matrix metalloproteinases (MMPs). The protein is C-type mannose receptor 2 (Mrc2) of Mus musculus (Mouse).